The chain runs to 141 residues: Vasotocin-neurophysin VT (141 aa).

A disulfide bridge links cysteine 1 with cysteine 6. A Glycine amide modification is found at glycine 9. 7 cysteine pairs are disulfide-bonded: cysteine 22-cysteine 66, cysteine 25-cysteine 39, cysteine 33-cysteine 56, cysteine 40-cysteine 46, cysteine 73-cysteine 85, cysteine 79-cysteine 97, and cysteine 86-cysteine 91. Asparagine 117 carries an N-linked (GlcNAc...) asparagine glycan.

The protein belongs to the vasopressin/oxytocin family. Seven disulfide bonds are present in neurophysin.

The protein resides in the secreted. Vasotocin is an antidiuretic hormone. This is Vasotocin-neurophysin VT from Pelophylax lessonae (Pool frog).